The sequence spans 404 residues: Multidrug resistance protein MdtG (404 aa).

A run of 11 helical transmembrane segments spans residues 19 to 39 (LGCF…PLYV), 56 to 76 (LVFS…GGLA), 90 to 110 (LGMA…QFLI), 113 to 133 (ALLG…ATQV), 149 to 169 (GVSG…HYGL), 171 to 191 (PVFF…FFFI), 222 to 242 (LFVT…ILTL), 254 to 274 (IAFI…LSAP), 288 to 308 (ILIV…FVQT), 317 to 337 (FLLG…LVYN), and 376 to 396 (AVFC…WNSL).

It belongs to the major facilitator superfamily. DHA1 family. MdtG (TC 2.A.1.2.20) subfamily.

The protein resides in the cell inner membrane. In Salmonella paratyphi C (strain RKS4594), this protein is Multidrug resistance protein MdtG.